Reading from the N-terminus, the 248-residue chain is 4-hydroxy-tetrahydrodipicolinate reductase (248 aa).

NAD(+) contacts are provided by residues D32, 74–76, and 99–102; these read GTT and SANF. Residue H134 is the Proton donor/acceptor of the active site. A (S)-2,3,4,5-tetrahydrodipicolinate-binding site is contributed by H135. K138 acts as the Proton donor in catalysis. Position 144–145 (144–145) interacts with (S)-2,3,4,5-tetrahydrodipicolinate; it reads GT.

This sequence belongs to the DapB family.

The protein resides in the cytoplasm. The catalysed reaction is (S)-2,3,4,5-tetrahydrodipicolinate + NAD(+) + H2O = (2S,4S)-4-hydroxy-2,3,4,5-tetrahydrodipicolinate + NADH + H(+). It carries out the reaction (S)-2,3,4,5-tetrahydrodipicolinate + NADP(+) + H2O = (2S,4S)-4-hydroxy-2,3,4,5-tetrahydrodipicolinate + NADPH + H(+). Its pathway is amino-acid biosynthesis; L-lysine biosynthesis via DAP pathway; (S)-tetrahydrodipicolinate from L-aspartate: step 4/4. Functionally, catalyzes the conversion of 4-hydroxy-tetrahydrodipicolinate (HTPA) to tetrahydrodipicolinate. The polypeptide is 4-hydroxy-tetrahydrodipicolinate reductase (Pelodictyon phaeoclathratiforme (strain DSM 5477 / BU-1)).